A 104-amino-acid chain; its full sequence is MEWICLIAAGILEMLGVTMMNQFHKDKRVRWIFLLIIGFAASFFLLSLAMETLPMGTAYAVWTGIGTVGGALVGILFYGEPKDGKRIFFIALILGSAVGLKLIS.

4 helical membrane passes run 3–23 (WICL…MNQF), 31–51 (WIFL…LAME), 58–78 (AYAV…ILFY), and 84–104 (GKRI…KLIS).

It belongs to the drug/metabolite transporter (DMT) superfamily. Small multidrug resistance (SMR) (TC 2.A.7.1) family. YkkC/YkkD subfamily. The efflux pump is composed of GdnC and GdnD.

Its subcellular location is the cell membrane. Probably involved in guanidinium transport. This is Probable guanidinium efflux system subunit GdnD from Bacillus licheniformis (strain ATCC 14580 / DSM 13 / JCM 2505 / CCUG 7422 / NBRC 12200 / NCIMB 9375 / NCTC 10341 / NRRL NRS-1264 / Gibson 46).